The following is a 119-amino-acid chain: Platelet basic protein (119 aa).

Residues Met1–Leu33 form the signal peptide. Positions Val34–Gly39 are excised as a propeptide. 2 disulfide bridges follow: Cys54-Cys80 and Cys56-Cys96.

It localises to the secreted. Functionally, chemoattractant factor for neutrophils. The protein is Platelet basic protein (PPBP) of Sus scrofa (Pig).